A 310-amino-acid chain; its full sequence is N-acetyl-gamma-glutamyl-phosphate reductase (310 aa).

The active site involves Cys117.

It belongs to the NAGSA dehydrogenase family. Type 2 subfamily.

It is found in the cytoplasm. The enzyme catalyses N-acetyl-L-glutamate 5-semialdehyde + phosphate + NADP(+) = N-acetyl-L-glutamyl 5-phosphate + NADPH + H(+). Its pathway is amino-acid biosynthesis; L-arginine biosynthesis; N(2)-acetyl-L-ornithine from L-glutamate: step 3/4. Its function is as follows. Catalyzes the NADPH-dependent reduction of N-acetyl-5-glutamyl phosphate to yield N-acetyl-L-glutamate 5-semialdehyde. The sequence is that of N-acetyl-gamma-glutamyl-phosphate reductase from Brucella suis (strain ATCC 23445 / NCTC 10510).